A 153-amino-acid polypeptide reads, in one-letter code: D-aminoacyl-tRNA deacylase (153 aa).

The Gly-cisPro motif, important for rejection of L-amino acids motif lies at 137–138 (GP).

The protein belongs to the DTD family. As to quaternary structure, homodimer.

The protein resides in the cytoplasm. It carries out the reaction glycyl-tRNA(Ala) + H2O = tRNA(Ala) + glycine + H(+). The enzyme catalyses a D-aminoacyl-tRNA + H2O = a tRNA + a D-alpha-amino acid + H(+). Its function is as follows. An aminoacyl-tRNA editing enzyme that deacylates mischarged D-aminoacyl-tRNAs. Also deacylates mischarged glycyl-tRNA(Ala), protecting cells against glycine mischarging by AlaRS. Acts via tRNA-based rather than protein-based catalysis; rejects L-amino acids rather than detecting D-amino acids in the active site. By recycling D-aminoacyl-tRNA to D-amino acids and free tRNA molecules, this enzyme counteracts the toxicity associated with the formation of D-aminoacyl-tRNA entities in vivo and helps enforce protein L-homochirality. This Methylococcus capsulatus (strain ATCC 33009 / NCIMB 11132 / Bath) protein is D-aminoacyl-tRNA deacylase.